The sequence spans 223 residues: UPF0441 protein YgiB (223 aa).

The span at 178 to 195 shows a compositional bias: low complexity; sequence TVPKTAMAPKPATTTTVT. The segment at 178-223 is disordered; it reads TVPKTAMAPKPATTTTVTRGGFGESVAKQSTMQRSATGTSSRSMGG. The span at 204–223 shows a compositional bias: polar residues; the sequence is AKQSTMQRSATGTSSRSMGG.

This sequence belongs to the UPF0441 family.

The protein is UPF0441 protein YgiB of Shigella boydii serotype 18 (strain CDC 3083-94 / BS512).